A 341-amino-acid polypeptide reads, in one-letter code: Holliday junction branch migration complex subunit RuvB (341 aa).

The interval 3–184 (DDFDIRDARM…FGINMHLEYY (182 aa)) is large ATPase domain (RuvB-L). Residues Leu-23, Arg-24, Gly-65, Lys-68, Thr-69, Thr-70, 131–133 (EDY), Arg-174, Tyr-184, and Arg-221 contribute to the ATP site. Residue Thr-69 coordinates Mg(2+). The interval 185–255 (DMETLTKIVL…IACFSLEALN (71 aa)) is small ATPAse domain (RuvB-S). Residues 258-341 (RYGLDQIDNK…RVGEQGFLFD (84 aa)) form a head domain (RuvB-H) region. 2 residues coordinate DNA: Arg-313 and Arg-318.

The protein belongs to the RuvB family. As to quaternary structure, homohexamer. Forms an RuvA(8)-RuvB(12)-Holliday junction (HJ) complex. HJ DNA is sandwiched between 2 RuvA tetramers; dsDNA enters through RuvA and exits via RuvB. An RuvB hexamer assembles on each DNA strand where it exits the tetramer. Each RuvB hexamer is contacted by two RuvA subunits (via domain III) on 2 adjacent RuvB subunits; this complex drives branch migration. In the full resolvosome a probable DNA-RuvA(4)-RuvB(12)-RuvC(2) complex forms which resolves the HJ.

It is found in the cytoplasm. The enzyme catalyses ATP + H2O = ADP + phosphate + H(+). In terms of biological role, the RuvA-RuvB-RuvC complex processes Holliday junction (HJ) DNA during genetic recombination and DNA repair, while the RuvA-RuvB complex plays an important role in the rescue of blocked DNA replication forks via replication fork reversal (RFR). RuvA specifically binds to HJ cruciform DNA, conferring on it an open structure. The RuvB hexamer acts as an ATP-dependent pump, pulling dsDNA into and through the RuvAB complex. RuvB forms 2 homohexamers on either side of HJ DNA bound by 1 or 2 RuvA tetramers; 4 subunits per hexamer contact DNA at a time. Coordinated motions by a converter formed by DNA-disengaged RuvB subunits stimulates ATP hydrolysis and nucleotide exchange. Immobilization of the converter enables RuvB to convert the ATP-contained energy into a lever motion, pulling 2 nucleotides of DNA out of the RuvA tetramer per ATP hydrolyzed, thus driving DNA branch migration. The RuvB motors rotate together with the DNA substrate, which together with the progressing nucleotide cycle form the mechanistic basis for DNA recombination by continuous HJ branch migration. Branch migration allows RuvC to scan DNA until it finds its consensus sequence, where it cleaves and resolves cruciform DNA. In Parabacteroides distasonis (strain ATCC 8503 / DSM 20701 / CIP 104284 / JCM 5825 / NCTC 11152), this protein is Holliday junction branch migration complex subunit RuvB.